An 852-amino-acid polypeptide reads, in one-letter code: Bifunctional heparan sulfate N-deacetylase/N-sulfotransferase 1 (852 aa).

At 1-13 (MIITPYLNRKITR) the chain is on the cytoplasmic side. The chain crosses the membrane as a helical; Signal-anchor for type II membrane protein span at residues 14–34 (PLKWILALIFLYLIYICLFSN). The heparan sulfate N-deacetylase 1 stretch occupies residues 34 to 574 (NNSKPPKPRK…PRHHAILPPS (541 aa)). At 35–852 (NSKPPKPRKK…WLEESVRIRA (818 aa)) the chain is on the lumenal side. 7 N-linked (GlcNAc...) asparagine glycosylation sites follow: asparagine 50, asparagine 72, asparagine 261, asparagine 328, asparagine 377, asparagine 428, and asparagine 576. Residues 575–852 (INCTKKSLPD…WLEESVRIRA (278 aa)) form a heparan sulfate N-sulfotransferase 1 region. The active-site For sulfotransferase activity is the lysine 592. 592–596 (KTGST) is a 3'-phosphoadenylyl sulfate binding site. Residue asparagine 607 is glycosylated (N-linked (GlcNAc...) asparagine). Serine 686 serves as a coordination point for 3'-phosphoadenylyl sulfate. A glycan (N-linked (GlcNAc...) asparagine) is linked at asparagine 712. The cysteines at positions 789 and 798 are disulfide-linked. Residue 803–807 (KGRKY) participates in 3'-phosphoadenylyl sulfate binding.

It belongs to the sulfotransferase 1 family. NDST subfamily. In terms of assembly, monomer. In terms of tissue distribution, present in some specific neurons in head and tail regions and muscles.

The protein resides in the golgi apparatus membrane. The catalysed reaction is alpha-D-glucosaminyl-[heparan sulfate](n) + 3'-phosphoadenylyl sulfate = N-sulfo-alpha-D-glucosaminyl-[heparan sulfate](n) + adenosine 3',5'-bisphosphate + 2 H(+). It participates in glycan metabolism; heparan sulfate biosynthesis. It functions in the pathway glycan metabolism; heparin biosynthesis. Functionally, essential bifunctional enzyme that catalyzes both the N-deacetylation and the N-sulfation of glucosamine (GlcNAc) of the glycosaminoglycan in heparan sulfate. Modifies the GlcNAc-GlcA disaccharide repeating sugar backbone to make N-sulfated heparosan, a prerequisite substrate for later modifications in heparin biosynthesis. The polypeptide is Bifunctional heparan sulfate N-deacetylase/N-sulfotransferase 1 (hst-1) (Caenorhabditis elegans).